The chain runs to 632 residues: tRNA uridine 5-carboxymethylaminomethyl modification enzyme MnmG (632 aa).

Residues 13-18 (GGGHAG), Val125, and Ser180 contribute to the FAD site. NAD(+) is bound at residue 273–287 (GPRYCPSIEDKVMRF). Gln370 provides a ligand contact to FAD.

This sequence belongs to the MnmG family. As to quaternary structure, homodimer. Heterotetramer of two MnmE and two MnmG subunits. Requires FAD as cofactor.

The protein resides in the cytoplasm. NAD-binding protein involved in the addition of a carboxymethylaminomethyl (cmnm) group at the wobble position (U34) of certain tRNAs, forming tRNA-cmnm(5)s(2)U34. The chain is tRNA uridine 5-carboxymethylaminomethyl modification enzyme MnmG from Proteus mirabilis (strain HI4320).